Consider the following 100-residue polypeptide: Small ribosomal subunit protein uS14 (100 aa).

Belongs to the universal ribosomal protein uS14 family. As to quaternary structure, part of the 30S ribosomal subunit. Contacts proteins S3 and S10.

In terms of biological role, binds 16S rRNA, required for the assembly of 30S particles and may also be responsible for determining the conformation of the 16S rRNA at the A site. This is Small ribosomal subunit protein uS14 from Synechococcus sp. (strain RCC307).